Reading from the N-terminus, the 488-residue chain is Glutamyl-tRNA(Gln) amidotransferase subunit A (488 aa).

Catalysis depends on charge relay system residues lysine 77 and serine 152. The active-site Acyl-ester intermediate is serine 176.

The protein belongs to the amidase family. GatA subfamily. In terms of assembly, heterotrimer of A, B and C subunits.

It carries out the reaction L-glutamyl-tRNA(Gln) + L-glutamine + ATP + H2O = L-glutaminyl-tRNA(Gln) + L-glutamate + ADP + phosphate + H(+). Functionally, allows the formation of correctly charged Gln-tRNA(Gln) through the transamidation of misacylated Glu-tRNA(Gln) in organisms which lack glutaminyl-tRNA synthetase. The reaction takes place in the presence of glutamine and ATP through an activated gamma-phospho-Glu-tRNA(Gln). The chain is Glutamyl-tRNA(Gln) amidotransferase subunit A from Streptococcus suis (strain 05ZYH33).